The following is a 450-amino-acid chain: ATP-dependent protease ATPase subunit HslU (450 aa).

Residues V29, 71-76 (GVGKTE), D261, E328, and R400 each bind ATP.

Belongs to the ClpX chaperone family. HslU subfamily. A double ring-shaped homohexamer of HslV is capped on each side by a ring-shaped HslU homohexamer. The assembly of the HslU/HslV complex is dependent on binding of ATP.

Its subcellular location is the cytoplasm. ATPase subunit of a proteasome-like degradation complex; this subunit has chaperone activity. The binding of ATP and its subsequent hydrolysis by HslU are essential for unfolding of protein substrates subsequently hydrolyzed by HslV. HslU recognizes the N-terminal part of its protein substrates and unfolds these before they are guided to HslV for hydrolysis. The polypeptide is ATP-dependent protease ATPase subunit HslU (Rickettsia conorii (strain ATCC VR-613 / Malish 7)).